The following is a 682-amino-acid chain: DNA-directed RNA polymerase subunit beta' (682 aa).

Zn(2+) is bound by residues C69, C71, C87, and C90. Mg(2+) is bound by residues D489, D491, and D493.

This sequence belongs to the RNA polymerase beta' chain family. RpoC1 subfamily. In plastids the minimal PEP RNA polymerase catalytic core is composed of four subunits: alpha, beta, beta', and beta''. When a (nuclear-encoded) sigma factor is associated with the core the holoenzyme is formed, which can initiate transcription. Requires Mg(2+) as cofactor. Zn(2+) serves as cofactor.

It localises to the plastid. The protein resides in the chloroplast. The enzyme catalyses RNA(n) + a ribonucleoside 5'-triphosphate = RNA(n+1) + diphosphate. In terms of biological role, DNA-dependent RNA polymerase catalyzes the transcription of DNA into RNA using the four ribonucleoside triphosphates as substrates. The chain is DNA-directed RNA polymerase subunit beta' from Brachypodium distachyon (Purple false brome).